The following is a 756-amino-acid chain: 5-methyltetrahydropteroyltriglutamate--homocysteine methyltransferase (756 aa).

Residues 16 to 19 (RELK) and lysine 112 contribute to the 5-methyltetrahydropteroyltri-L-glutamate site. L-homocysteine is bound by residues 432–434 (IGS) and glutamate 485. L-methionine-binding positions include 432-434 (IGS) and glutamate 485. Residues 516–517 (RC) and tryptophan 562 contribute to the 5-methyltetrahydropteroyltri-L-glutamate site. Aspartate 600 serves as a coordination point for L-homocysteine. Aspartate 600 provides a ligand contact to L-methionine. Glutamate 606 serves as a coordination point for 5-methyltetrahydropteroyltri-L-glutamate. Residues histidine 642, cysteine 644, and glutamate 666 each contribute to the Zn(2+) site. Histidine 695 serves as the catalytic Proton donor. A Zn(2+)-binding site is contributed by cysteine 727.

It belongs to the vitamin-B12 independent methionine synthase family. Requires Zn(2+) as cofactor.

It catalyses the reaction 5-methyltetrahydropteroyltri-L-glutamate + L-homocysteine = tetrahydropteroyltri-L-glutamate + L-methionine. It functions in the pathway amino-acid biosynthesis; L-methionine biosynthesis via de novo pathway; L-methionine from L-homocysteine (MetE route): step 1/1. Catalyzes the transfer of a methyl group from 5-methyltetrahydrofolate to homocysteine resulting in methionine formation. This Haemophilus influenzae (strain PittGG) protein is 5-methyltetrahydropteroyltriglutamate--homocysteine methyltransferase.